An 884-amino-acid chain; its full sequence is Coatomer subunit gamma-1 (884 aa).

5 HEAT repeats span residues 65–100 (VEATEVFFAVTKLFQSKDAGLRRLVYLMIKELSPSS), 101–138 (DEVIIVTSSLMKDMNSKTDMYRANAIRVLCRIIDGTLL), 286–323 (RELAPAITVLQLFLSSSKPVLRFAAVRTLNKVAMTRPL), 325–357 (VTNCNVDLESLMSDQNRSIATLAITTLLKTGNE), and 358–395 (SSVDRLMKQITNFMSDIADEFKIVVVEAIRSLCLKFPL). The segment at 592–612 (QPLQEKKAPGKKPPAGAPAPA) is disordered. Pro residues predominate over residues 602–612 (KKPPAGAPAPA).

The protein belongs to the COPG family. Oligomeric complex that consists of at least the alpha, beta, beta', gamma, delta, epsilon and zeta subunits.

The protein resides in the cytoplasm. It is found in the golgi apparatus membrane. It localises to the cytoplasmic vesicle. The protein localises to the COPI-coated vesicle membrane. In terms of biological role, the coatomer is a cytosolic protein complex that binds to dilysine motifs and reversibly associates with Golgi non-clathrin-coated vesicles, which further mediate biosynthetic protein transport from the ER, via the Golgi up to the trans Golgi network. Coatomer complex is required for budding from Golgi membranes, and is essential for the retrograde Golgi-to-ER transport of dilysine-tagged proteins. The chain is Coatomer subunit gamma-1 from Oryza sativa subsp. japonica (Rice).